Here is a 96-residue protein sequence, read N- to C-terminus: MSAAVWQDGEDIVLKLYIQPKASRDKIVGLHGEELKIAITAPPVDGKANAHLTKFLAKQFKIAKGLVHIEKGELGRHKQIRIESPVQIPAEVKAIL.

This sequence belongs to the UPF0235 family.

In Vibrio parahaemolyticus serotype O3:K6 (strain RIMD 2210633), this protein is UPF0235 protein VP2619.